The primary structure comprises 304 residues: N-acetylmuramic acid 6-phosphate etherase (304 aa).

An SIS domain is found at 58–221; the sequence is IVDRMKQGGR…TTASMVKMGK (164 aa). Glu86 functions as the Proton donor in the catalytic mechanism. Residue Glu117 is part of the active site.

This sequence belongs to the GCKR-like family. MurNAc-6-P etherase subfamily. In terms of assembly, homodimer.

It catalyses the reaction N-acetyl-D-muramate 6-phosphate + H2O = N-acetyl-D-glucosamine 6-phosphate + (R)-lactate. Its pathway is amino-sugar metabolism; N-acetylmuramate degradation. In terms of biological role, specifically catalyzes the cleavage of the D-lactyl ether substituent of MurNAc 6-phosphate, producing GlcNAc 6-phosphate and D-lactate. This Clostridioides difficile (strain 630) (Peptoclostridium difficile) protein is N-acetylmuramic acid 6-phosphate etherase.